The following is a 44-amino-acid chain: Antifungal protein R (44 aa).

The protein belongs to the thaumatin family.

Its function is as follows. Has antifungal activity. Inhibits the growth of Trichoderma viridae and Candida albicans. The polypeptide is Antifungal protein R (Hordeum vulgare (Barley)).